A 250-amino-acid polypeptide reads, in one-letter code: Probable transcriptional regulatory protein Mkms_2298 (250 aa).

It belongs to the TACO1 family.

It is found in the cytoplasm. This chain is Probable transcriptional regulatory protein Mkms_2298, found in Mycobacterium sp. (strain KMS).